The following is a 315-amino-acid chain: Protein-L-isoaspartate O-methyltransferase (315 aa).

Disordered regions lie at residues 1–47 (MSGE…KPAA) and 59–89 (RALP…AAPK). The segment covering 14–34 (EDLKRAPRKSEVRSGSGERHA) has biased composition (basic and acidic residues). Low complexity-rich tracts occupy residues 35–47 (ASAV…KPAA) and 59–81 (RALP…LKPA). Serine 162 is a catalytic residue.

It belongs to the methyltransferase superfamily. L-isoaspartyl/D-aspartyl protein methyltransferase family.

It is found in the cytoplasm. The catalysed reaction is [protein]-L-isoaspartate + S-adenosyl-L-methionine = [protein]-L-isoaspartate alpha-methyl ester + S-adenosyl-L-homocysteine. In terms of biological role, catalyzes the methyl esterification of L-isoaspartyl residues in peptides and proteins that result from spontaneous decomposition of normal L-aspartyl and L-asparaginyl residues. It plays a role in the repair and/or degradation of damaged proteins. In Burkholderia ambifaria (strain MC40-6), this protein is Protein-L-isoaspartate O-methyltransferase.